The sequence spans 208 residues: Thymidylate kinase (208 aa).

10–17 (GIDGSGKS) serves as a coordination point for ATP.

The protein belongs to the thymidylate kinase family.

It catalyses the reaction dTMP + ATP = dTDP + ADP. In terms of biological role, phosphorylation of dTMP to form dTDP in both de novo and salvage pathways of dTTP synthesis. The polypeptide is Thymidylate kinase (Jannaschia sp. (strain CCS1)).